We begin with the raw amino-acid sequence, 468 residues long: Adenosylhomocysteinase (468 aa).

Substrate is bound by residues Thr-57, Asp-132, and Glu-194. 195-197 (TTT) is an NAD(+) binding site. Lys-224 and Asp-228 together coordinate substrate. NAD(+)-binding positions include Asn-229, 258 to 263 (GFGDVG), Glu-281, Asn-316, 337 to 339 (IGH), and Asn-382.

It belongs to the adenosylhomocysteinase family. Requires NAD(+) as cofactor.

It is found in the cytoplasm. It catalyses the reaction S-adenosyl-L-homocysteine + H2O = L-homocysteine + adenosine. Its pathway is amino-acid biosynthesis; L-homocysteine biosynthesis; L-homocysteine from S-adenosyl-L-homocysteine: step 1/1. Functionally, may play a key role in the regulation of the intracellular concentration of adenosylhomocysteine. This is Adenosylhomocysteinase from Methylobacterium nodulans (strain LMG 21967 / CNCM I-2342 / ORS 2060).